Reading from the N-terminus, the 151-residue chain is UPF0178 protein Hhal_1913 (151 aa).

Belongs to the UPF0178 family.

The polypeptide is UPF0178 protein Hhal_1913 (Halorhodospira halophila (strain DSM 244 / SL1) (Ectothiorhodospira halophila (strain DSM 244 / SL1))).